The following is a 438-amino-acid chain: Protein phosphatase 2C homolog 2 (438 aa).

Residues 23–294 (IYGVSAMQGW…DNMTMVIIGF (272 aa)) enclose the PPM-type phosphatase domain. Residues Asp67, Gly68, Asp236, and Asp285 each coordinate Mn(2+). The tract at residues 370-438 (VLTGSDDTEM…EKTPEESKKD (69 aa)) is disordered. Residues 375–387 (DDTEMFDNADEDK) are compositionally biased toward acidic residues. Residues 398–438 (GKTDAKEETEAKPAPEAESSKPADGSEKKQDEKTPEESKKD) show a composition bias toward basic and acidic residues.

It belongs to the PP2C family. The cofactor is Mg(2+). Requires Mn(2+) as cofactor.

The protein localises to the cytoplasm. It localises to the nucleus. It carries out the reaction O-phospho-L-seryl-[protein] + H2O = L-seryl-[protein] + phosphate. It catalyses the reaction O-phospho-L-threonyl-[protein] + H2O = L-threonyl-[protein] + phosphate. Functionally, dephosphorylating regulator for many key proteins. Negatively regulates the endoplasmic reticulum unfolded protein response. The protein is Protein phosphatase 2C homolog 2 of Hypocrea jecorina (strain QM6a) (Trichoderma reesei).